Reading from the N-terminus, the 463-residue chain is NADH dehydrogenase [ubiquinone] iron-sulfur protein 2, mitochondrial (463 aa).

The N-terminal 33 residues, 1-33 (MAALRALRCLRGVGAPVLRPGSGIRLPSQPSRG), are a transit peptide targeting the mitochondrion. Lys62 carries the post-translational modification N6-acetyllysine. The residue at position 118 (Arg118) is a Symmetric dimethylarginine. The [4Fe-4S] cluster site is built by Cys326, Cys332, and Cys347.

This sequence belongs to the complex I 49 kDa subunit family. As to quaternary structure, core subunit of respiratory chain NADH dehydrogenase (Complex I) which is composed of 45 different subunits. Component of the iron-sulfur (IP) fragment of the enzyme. Interacts with NDUFAF3. Interacts with NDUFAF7. Interacts with CERS2. It depends on [4Fe-4S] cluster as a cofactor. In terms of processing, dimethylation at Arg-118 by NDUFAF7 takes place after NDUFS2 assembles into the complex I, leading to stabilize the early intermediate complex.

It localises to the mitochondrion inner membrane. The enzyme catalyses a ubiquinone + NADH + 5 H(+)(in) = a ubiquinol + NAD(+) + 4 H(+)(out). Functionally, core subunit of the mitochondrial membrane respiratory chain NADH dehydrogenase (Complex I) which catalyzes electron transfer from NADH through the respiratory chain, using ubiquinone as an electron acceptor. Essential for the catalytic activity and assembly of complex I. Redox-sensitive, critical component of the oxygen-sensing pathway in the pulmonary vasculature which plays a key role in acute pulmonary oxygen-sensing and hypoxic pulmonary vasoconstriction. Plays an important role in carotid body sensing of hypoxia. Essential for glia-like neural stem and progenitor cell proliferation, differentiation and subsequent oligodendrocyte or neuronal maturation. In Mus musculus (Mouse), this protein is NADH dehydrogenase [ubiquinone] iron-sulfur protein 2, mitochondrial (Ndufs2).